A 304-amino-acid chain; its full sequence is Probable phytol kinase 2, chloroplastic (304 aa).

Residues 1 to 59 constitute a chloroplast transit peptide; sequence MVSLISAHLLSLPSSAPRSRPQSRPPLSPPAAAAAASCSFDLPRPRRLVADGSRRKGTM. 7 consecutive transmembrane segments (helical) span residues 68 to 88, 113 to 133, 134 to 154, 170 to 190, 194 to 214, 231 to 251, and 256 to 276; these read SGLA…LALL, IGMV…APFL, AAVA…GVMK, ELLK…SIFW, PIAI…DIVG, AGSI…MHYF, and FIEE…TAAL.

The protein belongs to the polyprenol kinase family.

It is found in the plastid. Its subcellular location is the chloroplast membrane. It carries out the reaction phytol + CTP = phytyl phosphate + CDP + H(+). It functions in the pathway cofactor biosynthesis; tocopherol biosynthesis. Functionally, involved in the activation and reutilization of phytol from chlorophyll degradation in plant metabolism, including tocopherol biosynthesis. Catalyzes the conversion of phytol to phytol monophosphate (PMP). The polypeptide is Probable phytol kinase 2, chloroplastic (Oryza sativa subsp. japonica (Rice)).